A 265-amino-acid polypeptide reads, in one-letter code: uncharacterized protein (265 aa).

Residues M1–G22 form the signal peptide. The N-palmitoyl cysteine moiety is linked to residue C23. The S-diacylglycerol cysteine moiety is linked to residue C23.

Belongs to the staphylococcal tandem lipoprotein family.

It localises to the cell membrane. This is an uncharacterized protein from Staphylococcus aureus (strain MSSA476).